A 389-amino-acid chain; its full sequence is Phospho-N-acetylmuramoyl-pentapeptide-transferase (389 aa).

10 helical membrane passes run 25-45 (RAVM…PWVI), 74-94 (MGGV…CDWG), 97-117 (FIWV…VDDY), 134-154 (FFWQ…SVSE), 190-210 (ISYP…IVGS), 222-242 (GLVI…AYVM), 259-279 (AGEL…FLWF), 286-306 (VFMG…VAVI), 311-331 (IVLF…MAQV), and 366-386 (QVTV…LSTL).

Belongs to the glycosyltransferase 4 family. MraY subfamily. Mg(2+) serves as cofactor.

It localises to the cell inner membrane. It catalyses the reaction UDP-N-acetyl-alpha-D-muramoyl-L-alanyl-gamma-D-glutamyl-meso-2,6-diaminopimeloyl-D-alanyl-D-alanine + di-trans,octa-cis-undecaprenyl phosphate = di-trans,octa-cis-undecaprenyl diphospho-N-acetyl-alpha-D-muramoyl-L-alanyl-D-glutamyl-meso-2,6-diaminopimeloyl-D-alanyl-D-alanine + UMP. It functions in the pathway cell wall biogenesis; peptidoglycan biosynthesis. Catalyzes the initial step of the lipid cycle reactions in the biosynthesis of the cell wall peptidoglycan: transfers peptidoglycan precursor phospho-MurNAc-pentapeptide from UDP-MurNAc-pentapeptide onto the lipid carrier undecaprenyl phosphate, yielding undecaprenyl-pyrophosphoryl-MurNAc-pentapeptide, known as lipid I. In Cupriavidus necator (strain ATCC 17699 / DSM 428 / KCTC 22496 / NCIMB 10442 / H16 / Stanier 337) (Ralstonia eutropha), this protein is Phospho-N-acetylmuramoyl-pentapeptide-transferase.